Reading from the N-terminus, the 309-residue chain is Methionyl-tRNA formyltransferase (309 aa).

Residue 109 to 112 (SLLP) coordinates (6S)-5,6,7,8-tetrahydrofolate.

It belongs to the Fmt family.

The catalysed reaction is L-methionyl-tRNA(fMet) + (6R)-10-formyltetrahydrofolate = N-formyl-L-methionyl-tRNA(fMet) + (6S)-5,6,7,8-tetrahydrofolate + H(+). In terms of biological role, attaches a formyl group to the free amino group of methionyl-tRNA(fMet). The formyl group appears to play a dual role in the initiator identity of N-formylmethionyl-tRNA by promoting its recognition by IF2 and preventing the misappropriation of this tRNA by the elongation apparatus. The polypeptide is Methionyl-tRNA formyltransferase (Clostridium perfringens (strain SM101 / Type A)).